A 733-amino-acid polypeptide reads, in one-letter code: ATP-dependent RNA helicase DBP7 (733 aa).

Disordered regions lie at residues 1 to 92 (MDED…SKMI) and 119 to 139 (SSQL…SNAP). The span at 17–30 (SVSSGSNKRTTSKV) shows a compositional bias: polar residues. Residues 52-80 (QKKDRSATGKDDGKKHENDESNDSKKRPT) are compositionally biased toward basic and acidic residues. The Q motif signature appears at 144-173 (STFEGLGINERLSKHLTETLRFKNPTKVQK). A Helicase ATP-binding domain is found at 177 to 372 (PTMLSTERDL…SIILNNPEMI (196 aa)). 190-197 (AQTGSGKT) is a binding site for ATP. The short motif at 304-307 (DEGD) is the DEAD box element. The region spanning 406–596 (TLSAILKKIS…NYENYLKDGF (191 aa)) is the Helicase C-terminal domain. A disordered region spans residues 687 to 714 (KKLGKSVESNSGIQGASKKTKKEDPRKK).

It belongs to the DEAD box helicase family. DDX31/DBP7 subfamily.

The protein resides in the nucleus. Its subcellular location is the nucleolus. The enzyme catalyses ATP + H2O = ADP + phosphate + H(+). Its function is as follows. ATP-binding RNA helicase involved in the biogenesis of 60S ribosomal subunits and is required for the normal formation of 25S and 5.8S rRNAs. This is ATP-dependent RNA helicase DBP7 (DPB7) from Scheffersomyces stipitis (strain ATCC 58785 / CBS 6054 / NBRC 10063 / NRRL Y-11545) (Yeast).